A 1137-amino-acid chain; its full sequence is Isoleucine--tRNA ligase (1137 aa).

The short motif at 50 to 60 (PSANGMPGIHH) is the 'HIGH' region element. The 'KMSKS' region motif lies at 688 to 692 (KMSKR). An ATP-binding site is contributed by Lys691.

This sequence belongs to the class-I aminoacyl-tRNA synthetase family. IleS type 2 subfamily. Monomer. Zn(2+) serves as cofactor.

The protein localises to the cytoplasm. The enzyme catalyses tRNA(Ile) + L-isoleucine + ATP = L-isoleucyl-tRNA(Ile) + AMP + diphosphate. Catalyzes the attachment of isoleucine to tRNA(Ile). As IleRS can inadvertently accommodate and process structurally similar amino acids such as valine, to avoid such errors it has two additional distinct tRNA(Ile)-dependent editing activities. One activity is designated as 'pretransfer' editing and involves the hydrolysis of activated Val-AMP. The other activity is designated 'posttransfer' editing and involves deacylation of mischarged Val-tRNA(Ile). This Porphyromonas gingivalis (strain ATCC BAA-308 / W83) protein is Isoleucine--tRNA ligase.